The primary structure comprises 623 residues: Pentatricopeptide repeat-containing protein At5g15340, mitochondrial (623 aa).

The transit peptide at 1–16 (MKCLSYQKVRLLLRHC) directs the protein to the mitochondrion. 11 PPR repeats span residues 42–72 (RSYLSNALFQFYASSGEMVTAQKLFDEIPLS), 75–109 (DNVDWTTLLSSFSRYGLLVNSMKLFVEMRRKRVEI), 110–144 (DDVSVVCLFGVCAKLEDLGFAQQGHGVAVKMGVLT), 145–179 (SVKVCNALMDMYGKCGLVSEVKRIFEELEEKSVVS), 180–206 (WTVVLDTVVKWEGLERGREVFHEMPER), 207–237 (NAVAWTVMVAGYLGAGFTREVLELLAEMVFR), 243–277 (NFVTLCSMLSACAQSGNLVVGRWVHVYALKKEMMM), 285–319 (DVMVGTALVDMYAKCGNIDSSMNVFRLMRKRNVVT), 320–346 (WNALFSGLAMHGKGRMVIDMFPQMIRE), 350–384 (DDLTFTAVLSACSHSGIVDEGWRCFHSLRFYGLEP), and 385–419 (KVDHYACMVDLLGRAGLIEEAEILMREMPVPPNEV). The interval 420–495 (VLGSLLGSCS…IPGLSSIYVN (76 aa)) is type E motif. Residues 496–526 (DSVHRFSSGDRSHPRTKEIYLKLNEVIERIR) form a type E(+) motif region. Positions 527-623 (SAGYVPDVSG…GGSCSCSDYW (97 aa)) are type DYW motif.

It belongs to the PPR family. PCMP-H subfamily.

The protein localises to the mitochondrion. The sequence is that of Pentatricopeptide repeat-containing protein At5g15340, mitochondrial (PCMP-H91) from Arabidopsis thaliana (Mouse-ear cress).